Here is a 380-residue protein sequence, read N- to C-terminus: Nucleoporin Nup43 (380 aa).

M1 carries the N-acetylmethionine modification. 6 WD repeats span residues 8–57 (FVSQ…NLDS), 72–110 (RHHG…QTLS), 127–166 (PSYS…AVRT), 170–208 (ADSS…NEPS), 215–255 (GDRV…MPVS), and 259–299 (AHEA…PEKS).

As to quaternary structure, component of the Nup107-160 subcomplex of the nuclear pore complex (NPC). The Nup107-160 subcomplex includes NUP160, NUP133, NUP107, NUP98, NUP85, NUP43, NUP37, SEH1 and SEC13.

It localises to the chromosome. It is found in the centromere. The protein resides in the kinetochore. The protein localises to the nucleus. Its subcellular location is the nuclear pore complex. Its function is as follows. Component of the Nup107-160 subcomplex of the nuclear pore complex (NPC). The Nup107-160 subcomplex is required for the assembly of a functional NPC. The Nup107-160 subcomplex is also required for normal kinetochore microtubule attachment, mitotic progression and chromosome segregation. This Homo sapiens (Human) protein is Nucleoporin Nup43 (NUP43).